The sequence spans 1154 residues: Diacylglycerol kinase eta (1154 aa).

The segment at 1 to 54 is disordered; it reads MAGAGYQHHPPGGAAVGTSAVSPTAAGPGEDSSDSEAEQGGPQKLIRKVSTSGQ. Residues 59 to 152 enclose the PH domain; that stretch reads TSIKEGQLLK…WISSLKSVQS (94 aa). 2 consecutive Phorbol-ester/DAG-type zinc fingers follow at residues 169 to 219 and 241 to 292; these read MHNW…TNNC and PHQW…HPVC. Positions 322–457 constitute a DAGKc domain; it reads FCVSPLLVFV…LDRWSIMTYE (136 aa). Disordered regions lie at residues 560–608, 634–678, and 1123–1154; these read QASR…AVKP, DEQT…APEA, and FKMEKAQKQKTSSQPGPGDTESGSYEANSPGN. Positions 573–586 are enriched in acidic residues; the sequence is PEEDAVESSSEESL. Basic and acidic residues predominate over residues 656 to 667; that stretch reads DDSKDNDTKESP. Over residues 1131-1154 the composition is skewed to polar residues; sequence QKTSSQPGPGDTESGSYEANSPGN.

This sequence belongs to the eukaryotic diacylglycerol kinase family. Interacts with RAF1 and BRAF. Post-translationally, phosphorylated. Phosphorylation does not inhibit catalytic activity. As to expression, expressed in a wide variety of tissues. Most abundant in the brain and testis; also found in lung, spleen, and prostate (at protein level).

The protein localises to the cytoplasm. Its subcellular location is the cell membrane. It carries out the reaction a 1,2-diacyl-sn-glycerol + ATP = a 1,2-diacyl-sn-glycero-3-phosphate + ADP + H(+). It catalyses the reaction 1,2-di-(9Z-octadecenoyl)-sn-glycerol + ATP = 1,2-di-(9Z-octadecenoyl)-sn-glycero-3-phosphate + ADP + H(+). It participates in lipid metabolism; glycerolipid metabolism. Diacylglycerol kinase that converts diacylglycerol/DAG into phosphatidic acid/phosphatidate/PA and regulates the respective levels of these two bioactive lipids. Thereby, acts as a central switch between the signaling pathways activated by these second messengers with different cellular targets and opposite effects in numerous biological processes. Plays a key role in promoting cell growth. Activates the Ras/B-Raf/C-Raf/MEK/ERK signaling pathway induced by EGF. Regulates the recruitment of RAF1 and BRAF from cytoplasm to membranes and their heterodimerization. This is Diacylglycerol kinase eta (DGKH) from Mesocricetus auratus (Golden hamster).